We begin with the raw amino-acid sequence, 77 residues long: Sec-independent protein translocase protein TatA (77 aa).

Residues Met1–Gly21 form a helical membrane-spanning segment. Residues Gly42–Glu60 are compositionally biased toward basic and acidic residues. Residues Gly42–Val77 are disordered.

This sequence belongs to the TatA/E family. The Tat system comprises two distinct complexes: a TatABC complex, containing multiple copies of TatA, TatB and TatC subunits, and a separate TatA complex, containing only TatA subunits. Substrates initially bind to the TatABC complex, which probably triggers association of the separate TatA complex to form the active translocon.

The protein resides in the cell inner membrane. Part of the twin-arginine translocation (Tat) system that transports large folded proteins containing a characteristic twin-arginine motif in their signal peptide across membranes. TatA could form the protein-conducting channel of the Tat system. This Bradyrhizobium diazoefficiens (strain JCM 10833 / BCRC 13528 / IAM 13628 / NBRC 14792 / USDA 110) protein is Sec-independent protein translocase protein TatA.